Here is a 354-residue protein sequence, read N- to C-terminus: Guanine nucleotide-binding protein G(o) subunit alpha (354 aa).

The N-myristoyl glycine moiety is linked to residue Gly-2. Cys-3 carries the S-palmitoyl cysteine lipid modification. The G-alpha domain maps to 32 to 354 (KDVKLLLLGA…ANNLRGCGLY (323 aa)). The segment at 35-48 (KLLLLGAGESGKST) is G1 motif. Residues Glu-43, Lys-46, Ser-47, Thr-48, Ser-152, Leu-176, Arg-177, Thr-178, and Arg-179 each contribute to the GTP site. Position 47 (Ser-47) interacts with Mg(2+). The interval 174–182 (DILRTRVKT) is G2 motif. Residue Thr-182 participates in Mg(2+) binding. Positions 197–206 (FRLFDVGGQR) are G3 motif. Gln-205 bears the 5-glutamyl histamine mark. Residues 266–273 (ILFLNKKD) are G4 motif. Asn-270, Asp-273, and Cys-325 together coordinate GTP. The tract at residues 324-329 (TCATDT) is G5 motif. Cys-351 is lipidated: S-palmitoyl cysteine.

This sequence belongs to the G-alpha family. G(i/o/t/z) subfamily. G proteins are composed of 3 units; alpha, beta and gamma. The alpha chain contains the guanine nucleotide binding site. Forms a complex with GNB1 and GNG3. Interacts with RGS14. Interacts with RGS16. Interacts with RGS19. Interacts (when palmitoylated) with ADGRG3. Histaminylated at Gln-205 residues by TGM2.

It localises to the cell membrane. Its subcellular location is the membrane. It carries out the reaction GTP + H2O = GDP + phosphate + H(+). Its activity is regulated as follows. The GTPase activity is promoted by GTPAse activators, such as RGS14, RGS16 and RGS19. Its function is as follows. Guanine nucleotide-binding proteins (G proteins) function as transducers downstream of G protein-coupled receptors (GPCRs) in numerous signaling cascades. The alpha chain contains the guanine nucleotide binding site and alternates between an active, GTP-bound state and an inactive, GDP-bound state. Signaling by an activated GPCR promotes GDP release and GTP binding. The alpha subunit has a low GTPase activity that converts bound GTP to GDP, thereby terminating the signal. Both GDP release and GTP hydrolysis are modulated by numerous regulatory proteins. Signaling is mediated via effector proteins, such as adenylate cyclase. Inhibits adenylate cyclase activity, leading to decreased intracellular cAMP levels. This is Guanine nucleotide-binding protein G(o) subunit alpha (GNAO1) from Bos taurus (Bovine).